A 132-amino-acid polypeptide reads, in one-letter code: Fatty acid-binding protein 1 (132 aa).

The residue at position 2 (A2) is an N-acetylalanine.

This sequence belongs to the calycin superfamily. Fatty-acid binding protein (FABP) family.

This chain is Fatty acid-binding protein 1 (FABP-1), found in Fasciola gigantica (Giant liver fluke).